A 482-amino-acid chain; its full sequence is Ubiquitin carboxyl-terminal hydrolase 6 (482 aa).

The Ubiquitin-like domain maps to 2-77; that stretch reads PTVSVKWQKK…LMMMGTADEI (76 aa). Positions 104-478 constitute a USP domain; the sequence is AGLVNLGNTC…MAYITMYKAR (375 aa). Cys113 functions as the Nucleophile in the catalytic mechanism. The tract at residues 172–191 is calmodulin-binding; that stretch reads SQFWMVLRKKYPQFSQLQNG. Basic and acidic residues-rich tracts occupy residues 350-361 and 371-381; these read PRQKLREEEGKK and GSKDSDVKMTD. Residues 350–407 form a disordered region; that stretch reads PRQKLREEEGKKLGLQTSAKSGSKDSDVKMTDAEASANGSGESSTVNPQEGTSSEKET. The span at 382 to 393 shows a compositional bias: low complexity; it reads AEASANGSGESS. His430 functions as the Proton acceptor in the catalytic mechanism.

It belongs to the peptidase C19 family. Interacts with calmodulin (CaM).

It carries out the reaction Thiol-dependent hydrolysis of ester, thioester, amide, peptide and isopeptide bonds formed by the C-terminal Gly of ubiquitin (a 76-residue protein attached to proteins as an intracellular targeting signal).. Functionally, recognizes and hydrolyzes the peptide bond at the C-terminal Gly of ubiquitin. Involved in the processing of poly-ubiquitin precursors as well as that of ubiquitinated proteins. The protein is Ubiquitin carboxyl-terminal hydrolase 6 (UBP6) of Arabidopsis thaliana (Mouse-ear cress).